The primary structure comprises 362 residues: MYQSSSSTSSSSQRSSLPGGGGLIRYGSAPGSFLNSVVDEVIGGGSSNARDFTGYQPSSDNFIGNFFTGAADSSSLRSDSTTCGVNNSSDGQKQLGNNNNNNSNKDIFLDRSYGGFNEISQQHKSNDIGGGNSSGSYSLARQRSSPADFFTYLASDKNNFSLNQPTSDYSPQGGSNGGRGHSRLKSQLSFTNHDSLARINEVNETPVHDGSGHSFSAASFGAATTDSWDDGSGSIGFTVTRPSKRSKDMDSGLFSQYSLPSDTSMNYMDNFMQLPEDSVPCKIRAKRGCATHPRSIAERERRTRISGKLKKLQDLVPNMDKQTSYSDMLDLAVQHIKGLQHQLQNLKKDQENCTCGCSEKPS.

Positions 1 to 16 (MYQSSSSTSSSSQRSS) are enriched in low complexity. 4 disordered regions span residues 1-23 (MYQS…GGGL), 78-106 (SDST…SNKD), 120-140 (SQQH…YSLA), and 162-184 (LNQP…HSRL). Over residues 78 to 96 (SDSTTCGVNNSSDGQKQLG) the composition is skewed to polar residues. Over residues 162 to 173 (LNQPTSDYSPQG) the composition is skewed to polar residues. Residue S189 is modified to Phosphoserine. One can recognise a bHLH domain in the interval 289 to 339 (CATHPRSIAERERRTRISGKLKKLQDLVPNMDKQTSYSDMLDLAVQHIKGL).

Homodimer.

Its subcellular location is the nucleus. This is Transcription factor bHLH128 (BHLH128) from Arabidopsis thaliana (Mouse-ear cress).